Consider the following 848-residue polypeptide: Trimethylamine-N-oxide reductase 1 (848 aa).

The segment at residues 1 to 39 (MNNNDLFQASRRRFLAQLGGLTVAGMLGPSLLTSRRATA) is a signal peptide (tat-type signal). Serine 191 provides a ligand contact to Mo-bis(molybdopterin guanine dinucleotide).

It belongs to the prokaryotic molybdopterin-containing oxidoreductase family. Interacts with the N-terminal domain of TorC. The cofactor is Mo-bis(molybdopterin guanine dinucleotide). Post-translationally, predicted to be exported by the Tat system. The position of the signal peptide cleavage has not been experimentally proven.

It localises to the periplasm. It carries out the reaction trimethylamine + 2 Fe(III)-[cytochrome c] + H2O = trimethylamine N-oxide + 2 Fe(II)-[cytochrome c] + 3 H(+). Reduces trimethylamine-N-oxide (TMAO) into trimethylamine; an anaerobic reaction coupled to energy-yielding reactions. This chain is Trimethylamine-N-oxide reductase 1 (torA), found in Escherichia coli O157:H7.